A 254-amino-acid polypeptide reads, in one-letter code: Alcohol dehydrogenase (254 aa).

Residue 10 to 33 (FVAGLGGIGLDTSREIVKSGPKNL) coordinates NAD(+). Substrate is bound at residue Ser-138. Tyr-151 serves as the catalytic Proton acceptor.

Belongs to the short-chain dehydrogenases/reductases (SDR) family. Homodimer.

It carries out the reaction a primary alcohol + NAD(+) = an aldehyde + NADH + H(+). The enzyme catalyses a secondary alcohol + NAD(+) = a ketone + NADH + H(+). The polypeptide is Alcohol dehydrogenase (Adh) (Drosophila adiastola (Fruit fly)).